A 104-amino-acid polypeptide reads, in one-letter code: Small ubiquitin-related modifier 3 (104 aa).

Glycyl lysine isopeptide (Lys-Gly) (interchain with G-Cter in SUMO2) cross-links involve residues Lys-5 and Lys-7. Lys-11 is covalently cross-linked (Glycyl lysine isopeptide (Lys-Gly) (interchain with G-Cter in SUMO); alternate). A Glycyl lysine isopeptide (Lys-Gly) (interchain with G-Cter in SUMO2); alternate cross-link involves residue Lys-11. A Ubiquitin-like domain is found at 15-92 (DHINLKVAGQ…IDVFQQQTGG (78 aa)). Gly-92 is covalently cross-linked (Glycyl lysine isopeptide (Gly-Lys) (interchain with K-? in acceptor proteins)). The propeptide occupies 93–104 (SRVASCLLGSGL).

The protein belongs to the ubiquitin family. SUMO subfamily. In terms of assembly, interacts with SAE2 and UBE2I. Covalently attached to a number of proteins. Interacts with USP25 (via ts SIM domain); the interaction sumoylates USP25 and inhibits its ubiquitin hydrolyzing activity. Interacts with BMAL1. Polymeric chains can be formed through Lys-11 cross-linking. Post-translationally, cleavage of precursor form by SENP1, SENP2 or SENP5 is necessary for function.

It is found in the cytoplasm. The protein resides in the nucleus. The protein localises to the PML body. Its function is as follows. Ubiquitin-like protein which can be covalently attached to target lysines either as a monomer or as a lysine-linked polymer. Does not seem to be involved in protein degradation and may function as an antagonist of ubiquitin in the degradation process. Plays a role in a number of cellular processes such as nuclear transport, DNA replication and repair, mitosis and signal transduction. Covalent attachment to its substrates requires prior activation by the E1 complex SAE1-SAE2 and linkage to the E2 enzyme UBE2I, and can be promoted by an E3 ligase such as PIAS1-4, RANBP2 or CBX4. Plays a role in the regulation of sumoylation status of SETX. The chain is Small ubiquitin-related modifier 3 (SUMO3) from Bos taurus (Bovine).